Reading from the N-terminus, the 310-residue chain is Apolipoprotein E (310 aa).

The N-terminal stretch at 1–18 (MKVLWAALVVTLLAGCQA) is a signal peptide. A run of 8 repeats spans residues 77-98 (VLIEETMKEVKTYKAELEQQLG), 99-120 (PMAQETQARVSKELQAAQARLG), 121-142 (ADMEDVRNRLVQYRSELQAMMG), 143-164 (QSTEELRGRLNSHLRKLRKRLL), 165-186 (RDAEDLQKRLAVYQAGIREGAE), 187-204 (RSVNTLRERLGPLVEQAA), 205-226 (TVRSLVSKPLQERAEAWGQRLR), and 227-248 (GRLEKVGIQAGDRLDEVREQVQ). Residues 77–248 (VLIEETMKEV…RLDEVREQVQ (172 aa)) form an 8 X 22 AA approximate tandem repeats region. At methionine 140 the chain carries Methionine sulfoxide. The residue at position 144 (serine 144) is a Phosphoserine. The interval 155 to 165 (HLRKLRKRLLR) is LDL and other lipoprotein receptors binding. 159-162 (LRKR) contributes to the heparin binding site. The segment at 203–283 (AATVRSLVSK…SWFEPLVQDM (81 aa)) is lipid-binding and lipoprotein association. 222–229 (GQRLRGRL) contacts heparin. The interval 259–310 (NQMRLQAEAFHARLKSWFEPLVQDMQQRWAELVEKVQLAVGTSPTSESSEKQ) is homooligomerization. The segment at 271-283 (RLKSWFEPLVQDM) is specificity for association with VLDL.

The protein belongs to the apolipoprotein A1/A4/E family. In terms of assembly, homotetramer. May interact with ABCA1; functionally associated with ABCA1 in the biogenesis of HDLs. May interact with APP/A4 amyloid-beta peptide; the interaction is extremely stable in vitro but its physiological significance is unclear. May interact with MAPT. May interact with MAP2. In the cerebrospinal fluid, interacts with secreted SORL1. Interacts with PMEL; this allows the loading of PMEL luminal fragment on ILVs to induce fibril nucleation. APOE exists as multiple glycosylated and sialylated glycoforms within cells and in plasma. The extent of glycosylation and sialylation are tissue and context specific. Post-translationally, glycated in plasma VLDL. In terms of processing, phosphorylated by FAM20C in the extracellular medium.

The protein resides in the secreted. Its subcellular location is the extracellular space. The protein localises to the extracellular matrix. It is found in the extracellular vesicle. It localises to the endosome. The protein resides in the multivesicular body. Its function is as follows. APOE is an apolipoprotein, a protein associating with lipid particles, that mainly functions in lipoprotein-mediated lipid transport between organs via the plasma and interstitial fluids. APOE is a core component of plasma lipoproteins and is involved in their production, conversion and clearance. Apolipoproteins are amphipathic molecules that interact both with lipids of the lipoprotein particle core and the aqueous environment of the plasma. As such, APOE associates with chylomicrons, chylomicron remnants, very low density lipoproteins (VLDL) and intermediate density lipoproteins (IDL) but shows a preferential binding to high-density lipoproteins (HDL). It also binds a wide range of cellular receptors including the LDL receptor/LDLR, the LDL receptor-related proteins LRP1, LRP2 and LRP8 and the very low-density lipoprotein receptor/VLDLR that mediate the cellular uptake of the APOE-containing lipoprotein particles. Finally, APOE also has a heparin-binding activity and binds heparan-sulfate proteoglycans on the surface of cells, a property that supports the capture and the receptor-mediated uptake of APOE-containing lipoproteins by cells. A main function of APOE is to mediate lipoprotein clearance through the uptake of chylomicrons, VLDLs, and HDLs by hepatocytes. APOE is also involved in the biosynthesis by the liver of VLDLs as well as their uptake by peripheral tissues ensuring the delivery of triglycerides and energy storage in muscle, heart and adipose tissues. By participating in the lipoprotein-mediated distribution of lipids among tissues, APOE plays a critical role in plasma and tissues lipid homeostasis. APOE is also involved in two steps of reverse cholesterol transport, the HDLs-mediated transport of cholesterol from peripheral tissues to the liver, and thereby plays an important role in cholesterol homeostasis. First, it is functionally associated with ABCA1 in the biogenesis of HDLs in tissues. Second, it is enriched in circulating HDLs and mediates their uptake by hepatocytes. APOE also plays an important role in lipid transport in the central nervous system, regulating neuron survival and sprouting. The protein is Apolipoprotein E (APOE) of Tapirus indicus (Asiatic tapir).